The primary structure comprises 425 residues: Elongation factor 1-alpha (425 aa).

One can recognise a tr-type G domain in the interval 5–221 (KPHMNLAVIG…NALSEPEKPT (217 aa)). A G1 region spans residues 14 to 21 (GHIDHGKS). A GTP-binding site is contributed by 14 to 21 (GHIDHGKS). Residue S21 coordinates Mg(2+). Residues 70 to 74 (GITID) are G2. The tract at residues 91-94 (DCPG) is G3. Residues 91–95 (DCPGH) and 146–149 (NKMD) contribute to the GTP site. Residues 146–149 (NKMD) form a G4 region. The tract at residues 185–187 (SAF) is G5.

Belongs to the TRAFAC class translation factor GTPase superfamily. Classic translation factor GTPase family. EF-Tu/EF-1A subfamily.

The protein resides in the cytoplasm. The catalysed reaction is GTP + H2O = GDP + phosphate + H(+). Its function is as follows. GTP hydrolase that promotes the GTP-dependent binding of aminoacyl-tRNA to the A-site of ribosomes during protein biosynthesis. The protein is Elongation factor 1-alpha of Methanoculleus marisnigri (strain ATCC 35101 / DSM 1498 / JR1).